The following is a 586-amino-acid chain: Phosphomethylpyrimidine synthase (586 aa).

Residues 1–59 (MKQSVSAEQIELKSSLPGSKKVYVDGPREGMKVPMREIEQSDTNGVPNPPIRVYDTSGP) form a disordered region. Positions 22–39 (VYVDGPREGMKVPMREIE) are enriched in basic and acidic residues. Residues Asn-193, Met-222, Tyr-251, His-287, 307–309 (SRG), 348–351 (DGLR), and Glu-387 contribute to the substrate site. A Zn(2+)-binding site is contributed by His-391. A substrate-binding site is contributed by Tyr-414. Zn(2+) is bound at residue His-455. [4Fe-4S] cluster is bound by residues Cys-535, Cys-538, and Cys-543.

It belongs to the ThiC family. [4Fe-4S] cluster is required as a cofactor.

The enzyme catalyses 5-amino-1-(5-phospho-beta-D-ribosyl)imidazole + S-adenosyl-L-methionine = 4-amino-2-methyl-5-(phosphooxymethyl)pyrimidine + CO + 5'-deoxyadenosine + formate + L-methionine + 3 H(+). The protein operates within cofactor biosynthesis; thiamine diphosphate biosynthesis. Functionally, catalyzes the synthesis of the hydroxymethylpyrimidine phosphate (HMP-P) moiety of thiamine from aminoimidazole ribotide (AIR) in a radical S-adenosyl-L-methionine (SAM)-dependent reaction. This is Phosphomethylpyrimidine synthase from Bacillus cereus (strain ATCC 10987 / NRS 248).